The sequence spans 248 residues: UPF0736 protein BCE_1296 (248 aa).

This sequence belongs to the UPF0736 family.

In Bacillus cereus (strain ATCC 10987 / NRS 248), this protein is UPF0736 protein BCE_1296.